Reading from the N-terminus, the 342-residue chain is Alanine racemase (342 aa).

The active-site Proton acceptor; specific for D-alanine is K33. The residue at position 33 (K33) is an N6-(pyridoxal phosphate)lysine. R128 is a substrate binding site. Residue Y240 is the Proton acceptor; specific for L-alanine of the active site. Residue M288 participates in substrate binding.

This sequence belongs to the alanine racemase family. Requires pyridoxal 5'-phosphate as cofactor.

It carries out the reaction L-alanine = D-alanine. The protein operates within amino-acid biosynthesis; D-alanine biosynthesis; D-alanine from L-alanine: step 1/1. Its function is as follows. Catalyzes the interconversion of L-alanine and D-alanine. May also act on other amino acids. This chain is Alanine racemase (alr), found in Jannaschia sp. (strain CCS1).